Here is a 669-residue protein sequence, read N- to C-terminus: Probable L-type lectin-domain containing receptor kinase I.2 (669 aa).

Residues Met1–Gln24 form the signal peptide. The Extracellular segment spans residues Gln25–Pro295. The tract at residues Asp26–Ser266 is legume-lectin like. 4 N-linked (GlcNAc...) asparagine glycosylation sites follow: Asn132, Asn189, Asn212, and Asn233. Residues Leu296–Tyr316 form a helical membrane-spanning segment. Over Leu317–Arg669 the chain is Cytoplasmic. The Protein kinase domain occupies Phe351–Leu609. ATP contacts are provided by residues Leu357–Val365 and Lys379. Catalysis depends on Asp475, which acts as the Proton acceptor.

It in the C-terminal section; belongs to the protein kinase superfamily. Ser/Thr protein kinase family. In the N-terminal section; belongs to the leguminous lectin family.

Its subcellular location is the cell membrane. It carries out the reaction L-seryl-[protein] + ATP = O-phospho-L-seryl-[protein] + ADP + H(+). The enzyme catalyses L-threonyl-[protein] + ATP = O-phospho-L-threonyl-[protein] + ADP + H(+). Functionally, involved in resistance response to the pathogenic fungus Alternaria brassicicola. This Arabidopsis thaliana (Mouse-ear cress) protein is Probable L-type lectin-domain containing receptor kinase I.2.